The following is a 207-amino-acid chain: DNA protection during starvation protein 1 (207 aa).

The segment covering 1–12 (MTKKSTKSEAAS) has biased composition (basic and acidic residues). The tract at residues 1-31 (MTKKSTKSEAASKTKKSGVPETGAQGVRAGG) is disordered. Fe cation-binding residues include histidine 83, aspartate 110, and glutamate 114.

The protein belongs to the Dps family. In terms of assembly, the 12 subunits form a hollow sphere into which the mineral iron core of up to 500 Fe(3+) can be deposited. The homododecameric forms at higher concentration of salt, the homodimeric form under reducing, low-salt conditions. The assembly of the dodecamer is irreversible.

The protein resides in the cytoplasm. It is found in the nucleoid. The catalysed reaction is 2 Fe(2+) + H2O2 + 2 H(+) = 2 Fe(3+) + 2 H2O. Its function is as follows. Protects DNA from oxidative damage by sequestering intracellular Fe(2+) ion and storing it in the form of Fe(3+) oxyhydroxide mineral. One hydrogen peroxide oxidizes two Fe(2+) ions, which prevents hydroxyl radical production by the Fenton reaction. Both oligomeric forms of dps exhibit ferroxidase activity and DNA binding. Dodecameric dps is capable of Fe(2+) oxidation/mineralization. Only dimeric dps affords efficient DNA protection against hydroxyl radical-mediated cleavage. This is DNA protection during starvation protein 1 (dps1) from Deinococcus radiodurans (strain ATCC 13939 / DSM 20539 / JCM 16871 / CCUG 27074 / LMG 4051 / NBRC 15346 / NCIMB 9279 / VKM B-1422 / R1).